We begin with the raw amino-acid sequence, 294 residues long: 4-hydroxy-tetrahydrodipicolinate synthase (294 aa).

Residue Thr47 participates in pyruvate binding. Tyr136 serves as the catalytic Proton donor/acceptor. The active-site Schiff-base intermediate with substrate is Lys164. Val206 is a pyruvate binding site.

This sequence belongs to the DapA family. As to quaternary structure, homotetramer; dimer of dimers.

It is found in the cytoplasm. It carries out the reaction L-aspartate 4-semialdehyde + pyruvate = (2S,4S)-4-hydroxy-2,3,4,5-tetrahydrodipicolinate + H2O + H(+). It functions in the pathway amino-acid biosynthesis; L-lysine biosynthesis via DAP pathway; (S)-tetrahydrodipicolinate from L-aspartate: step 3/4. In terms of biological role, catalyzes the condensation of (S)-aspartate-beta-semialdehyde [(S)-ASA] and pyruvate to 4-hydroxy-tetrahydrodipicolinate (HTPA). The polypeptide is 4-hydroxy-tetrahydrodipicolinate synthase (Cyanothece sp. (strain PCC 7425 / ATCC 29141)).